The chain runs to 178 residues: Transcription factor E (178 aa).

In terms of domain architecture, HTH TFE/IIEalpha-type spans 3-86 (AHEALAEIAG…YWRITDEPIQ (84 aa)).

The protein belongs to the TFE family. In terms of assembly, monomer. Interaction with RNA polymerase subunits RpoF and RpoE is necessary for Tfe stimulatory transcription activity. Able to interact with Tbp and RNA polymerase in the absence of DNA promoter. Interacts both with the preinitiation and elongation complexes.

Functionally, transcription factor that plays a role in the activation of archaeal genes transcribed by RNA polymerase. Facilitates transcription initiation by enhancing TATA-box recognition by TATA-box-binding protein (Tbp), and transcription factor B (Tfb) and RNA polymerase recruitment. Not absolutely required for transcription in vitro, but particularly important in cases where Tbp or Tfb function is not optimal. It dynamically alters the nucleic acid-binding properties of RNA polymerases by stabilizing the initiation complex and destabilizing elongation complexes. Seems to translocate with the RNA polymerase following initiation and acts by binding to the non template strand of the transcription bubble in elongation complexes. This is Transcription factor E from Thermofilum pendens (strain DSM 2475 / Hrk 5).